The chain runs to 278 residues: Large ribosomal subunit protein uL2 (278 aa).

Disordered regions lie at residues 29–53 (PEKS…TTRH) and 223–278 (GVAM…GKKR). Positions 255–268 (GRTRRPGKESDKLI) are enriched in basic and acidic residues. Residues 269–278 (VRRRRTGKKR) are compositionally biased toward basic residues.

It belongs to the universal ribosomal protein uL2 family. As to quaternary structure, part of the 50S ribosomal subunit. Forms a bridge to the 30S subunit in the 70S ribosome.

Its function is as follows. One of the primary rRNA binding proteins. Required for association of the 30S and 50S subunits to form the 70S ribosome, for tRNA binding and peptide bond formation. It has been suggested to have peptidyltransferase activity; this is somewhat controversial. Makes several contacts with the 16S rRNA in the 70S ribosome. In Kineococcus radiotolerans (strain ATCC BAA-149 / DSM 14245 / SRS30216), this protein is Large ribosomal subunit protein uL2.